The sequence spans 285 residues: Polyamine aminopropyltransferase (285 aa).

The PABS domain maps to 2-237 (DLWFSESHTP…GYWCFGFASK (236 aa)). Residue Gln31 coordinates S-methyl-5'-thioadenosine. Asp86 is a spermidine binding site. S-methyl-5'-thioadenosine-binding positions include Glu106 and 137–138 (DG). Asp155 serves as the catalytic Proton acceptor.

The protein belongs to the spermidine/spermine synthase family. In terms of assembly, homodimer or homotetramer.

The protein localises to the cytoplasm. The catalysed reaction is S-adenosyl 3-(methylsulfanyl)propylamine + putrescine = S-methyl-5'-thioadenosine + spermidine + H(+). It participates in amine and polyamine biosynthesis; spermidine biosynthesis; spermidine from putrescine: step 1/1. Catalyzes the irreversible transfer of a propylamine group from the amino donor S-adenosylmethioninamine (decarboxy-AdoMet) to putrescine (1,4-diaminobutane) to yield spermidine. The protein is Polyamine aminopropyltransferase of Streptococcus uberis (strain ATCC BAA-854 / 0140J).